A 471-amino-acid chain; its full sequence is MENFKHLPEPFRIRVIEPVKRTTRAYREEAIIKSGMNPFLLDREDVFIDLLTDSGTGAVTQSMQAAMMRGDEAYSGSRSYYALAESVKNIFGYQYTIPTHQGRGAEQIYIPVLIKKREQEKGLDRSKMVAFSNYFFDTTQGHSQINGCTVRNVYIKEAFDTGVRYDFKGNFDLEGLERGIEEVGPNNVPYIVATITSNSAGGQPVSLANLKAMYSIAKKYDIPVVMDSARFAENAYFIKQREAEYKDWTIEQITRETYKYADMLAMSAKKDAMVPMGGLLCMKDDSFFDVYTECRTLCVVQEGFPTYGGLEGGAMERLAVGLYDGMNLDWLAYRIAQVQYLVDGLEEIGVVCQQAGGHAAFVDAGKLLPHIPADQFPAQALACELYKVAGIRAVEIGSFLLGRDPKTGKQLPCPAELLRLTIPRATYTQTHMDFIIEAFKHVKENAANIKGLTFTYEPKVLRHFTAKLKEV.

3 positions are modified to N6-acetyllysine: lysine 5, lysine 115, and lysine 156. The residue at position 270 (lysine 270) is an N6-(pyridoxal phosphate)lysine. The residue at position 450 (lysine 450) is an N6-acetyllysine.

The protein belongs to the beta-eliminating lyase family. As to quaternary structure, homotetramer. It depends on pyridoxal 5'-phosphate as a cofactor.

It catalyses the reaction L-tryptophan + H2O = indole + pyruvate + NH4(+). The protein operates within amino-acid degradation; L-tryptophan degradation via pyruvate pathway; indole and pyruvate from L-tryptophan: step 1/1. The chain is Tryptophanase from Shigella boydii serotype 18 (strain CDC 3083-94 / BS512).